Reading from the N-terminus, the 76-residue chain is UPF0248 protein MmarC5_1387 (76 aa).

Belongs to the UPF0248 family.

In Methanococcus maripaludis (strain C5 / ATCC BAA-1333), this protein is UPF0248 protein MmarC5_1387.